The sequence spans 188 residues: Probable manganese efflux pump MntP (188 aa).

5 helical membrane-spanning segments follow: residues 3–23 (ITATVLLAFGMSMDAFAASIG), 66–86 (LEWNHWIAFVLLIFLGGRMII), 106–128 (WLLVTTAIATSLDAMAVGVGLAF), 143–163 (ATLIMSTLGMMVGRFIGSIIG), and 168–188 (ILGGLVLIGIGVQILWTHFHG).

This sequence belongs to the MntP (TC 9.B.29) family.

The protein localises to the cell inner membrane. Its function is as follows. Probably functions as a manganese efflux pump. In Escherichia coli O139:H28 (strain E24377A / ETEC), this protein is Probable manganese efflux pump MntP.